A 427-amino-acid chain; its full sequence is Lactadherin (427 aa).

The signal sequence occupies residues 1–18 (MPCPRLLAALFCSSGLFA). EGF-like domains follow at residues 20 to 59 (SGDF…LLCN) and 62 to 106 (EHGP…IHCE). Cystine bridges form between Cys24-Cys35, Cys29-Cys47, and Cys49-Cys58. Ser27 is a glycosylation site (O-linked (Fuc...) serine; in PAS-6). O-linked (Fuc...) threonine; in PAS-7 glycosylation is present at Thr34. N-linked (GlcNAc...) (hybrid) asparagine; in PAS-6 and PAS-7 glycosylation occurs at Asn59. Intrachain disulfides connect Cys66-Cys77, Cys71-Cys94, Cys96-Cys105, Cys109-Cys265, Cys252-Cys256, and Cys270-Cys427. A Cell attachment site motif is present at residues 85–87 (RGD). F5/8 type C domains lie at 109-265 (CTSP…LLGC) and 270-427 (CTEP…LLGC). Residue Asn227 is glycosylated (N-linked (GlcNAc...) (high mannose) asparagine; in PAS-6).

In terms of processing, the two O-linked glycans consist of Gal, GlcNAc and Fuc, with probably Fuc as reducing terminal sugar. Milk and spermatozoan. Also present in epididymis, kidney, heart, lymphatic gland and spleen but not esophagus, small intestine, muscle and liver.

It localises to the membrane. It is found in the secreted. The protein resides in the cytoplasmic vesicle. The protein localises to the secretory vesicle. Its subcellular location is the acrosome membrane. In terms of biological role, contributes to phagocytic removal of apoptotic cells in many tissues. Plays an important role in the maintenance of intestinal epithelial homeostasis and the promotion of mucosal healing. Promotes VEGF-dependent neovascularization. Specific ligand for the alpha-v/beta-3 and alpha-v/beta-5 receptors. Also binds to phosphatidylserine-enriched cell surfaces in a receptor-independent manner. Zona pellucida-binding protein which may play a role in gamete interaction. The chain is Lactadherin (MFGE8) from Bos taurus (Bovine).